Consider the following 132-residue polypeptide: Agouti-signaling protein (132 aa).

An N-terminal signal peptide occupies residues 1–22; the sequence is MDVTRLLLATLLVFLCFFTAYS. Asparagine 39 carries an N-linked (GlcNAc...) asparagine glycan. Residues 62 to 88 form a disordered region; it reads ISRKEAEKKRSSKKEASMKKVARPRTP. Basic and acidic residues predominate over residues 63-79; that stretch reads SRKEAEKKRSSKKEASM. 5 disulfide bridges follow: cysteine 93/cysteine 108, cysteine 100/cysteine 114, cysteine 107/cysteine 125, cysteine 111/cysteine 132, and cysteine 116/cysteine 123. The Agouti domain occupies 93-132; that stretch reads CVATRDSCKPPAPACCDPCASCQCRFFRSACSCRVLSLNC.

The protein localises to the secreted. Its function is as follows. Involved in the regulation of melanogenesis. The binding of ASP to MC1R precludes alpha-MSH initiated signaling and thus blocks production of cAMP, leading to a down-regulation of eumelanogenesis (brown/black pigment) and thus increasing synthesis of pheomelanin (yellow/red pigment). This chain is Agouti-signaling protein (ASIP), found in Chlorocebus aethiops (Green monkey).